We begin with the raw amino-acid sequence, 147 residues long: Hemoglobin subunit beta (147 aa).

N-acetylvaline is present on V2. Residues H3–H147 form the Globin domain. A Phosphoserine modification is found at S45. Residue K60 is modified to N6-acetyllysine. H64 serves as a coordination point for heme b. An N6-acetyllysine modification is found at K83. Residue H93 participates in heme b binding. Position 94 is an S-nitrosocysteine (C94).

Belongs to the globin family. In terms of assembly, heterotetramer of two alpha chains and two beta chains. As to expression, red blood cells.

Functionally, involved in oxygen transport from the lung to the various peripheral tissues. This Camelus dromedarius (Dromedary) protein is Hemoglobin subunit beta (HBB).